Reading from the N-terminus, the 274-residue chain is MTPEQSPLGKPSSYTEQYDASLLFPIARKNARDQIGIGATLPFFGTDIWNAYELSWLNARGKPQIAIATFYVPADSPNIVESKSFKLYLGSFAQSSFDSIDVVRDTIKRDVSAACGSSVSLHLYPPAEFSKLGLEEFEGTSLDRLDLDAEVYQPDASILKAALDEAPVEETLFSNLLKSNCPVTGQPDWGSVQIHYVGPQIDHAALLRYIISYRNHTGFHEQCVEKIFLDVMKVCQPVKLAVYARYTRRGGLDINPFRTNFNLPMPDNLRTARQ.

Position 80–82 (80–82) interacts with substrate; the sequence is VES. An NADPH-binding site is contributed by 82-83; it reads SK. Cysteine 181 (thioimide intermediate) is an active-site residue. Aspartate 188 (proton donor) is an active-site residue. A substrate-binding site is contributed by 220–221; it reads HE. Residue 249–250 coordinates NADPH; sequence RG.

This sequence belongs to the GTP cyclohydrolase I family. QueF type 2 subfamily. Homodimer.

It is found in the cytoplasm. It carries out the reaction 7-aminomethyl-7-carbaguanine + 2 NADP(+) = 7-cyano-7-deazaguanine + 2 NADPH + 3 H(+). It functions in the pathway tRNA modification; tRNA-queuosine biosynthesis. Functionally, catalyzes the NADPH-dependent reduction of 7-cyano-7-deazaguanine (preQ0) to 7-aminomethyl-7-deazaguanine (preQ1). In Paraburkholderia phymatum (strain DSM 17167 / CIP 108236 / LMG 21445 / STM815) (Burkholderia phymatum), this protein is NADPH-dependent 7-cyano-7-deazaguanine reductase.